The chain runs to 75 residues: UPF0352 protein VP2129 (75 aa).

Belongs to the UPF0352 family.

In Vibrio parahaemolyticus serotype O3:K6 (strain RIMD 2210633), this protein is UPF0352 protein VP2129.